Reading from the N-terminus, the 311-residue chain is MRGVVWAARRRAGQQWPRSPGPGPGPPPPPPLLLLLLLLLGGASAQYSSDLCSWKGSGLTREAHSKEVEQVYLRCSAGSVEWMYPTGALIVNLRPNTFSPAQNLTVCIKPFRDSSGANIYLEKTGELRLLVRDVRGEPGQVQCFSLEQGGLFVEATPQQDISRRTTGFQYELMSGQRGLDLHVLSAPCRPCSDTEVLLAICTSDFVVRGFIEDVTHVPEQQVSVIHLRVSRLHRQKSRVFQPAPEDSGHWLGHVTTLLQCGVRPGHGEFLFTGHVHFGEAQLGCAPRFSDFQKMYRKAEERGINPCEINME.

Positions 1 to 45 (MRGVVWAARRRAGQQWPRSPGPGPGPPPPPPLLLLLLLLLGGASA) are cleaved as a signal peptide. A disulfide bond links C52 and C75. N103 is a glycosylation site (N-linked (GlcNAc...) asparagine). Cystine bridges form between C107-C143, C188-C260, C191-C284, and C201-C306.

This sequence belongs to the meteorin family. In terms of tissue distribution, abundantly expressed in adipose tissue.

It localises to the secreted. Functionally, hormone induced following exercise or cold exposure that promotes energy expenditure. Induced either in the skeletal muscle after exercise or in adipose tissue following cold exposure and is present in the circulation. Able to stimulate energy expenditure associated with the browning of the white fat depots and improves glucose tolerance. Does not promote an increase in a thermogenic gene program via direct action on adipocytes, but acts by stimulating several immune cell subtypes to enter the adipose tissue and activate their prothermogenic actions. Stimulates an eosinophil-dependent increase in IL4 expression and promotes alternative activation of adipose tissue macrophages, which are required for the increased expression of the thermogenic and anti-inflammatory gene programs in fat. Required for some cold-induced thermogenic responses, suggesting a role in metabolic adaptations to cold temperatures. This Rattus norvegicus (Rat) protein is Meteorin-like protein (Metrnl).